The primary structure comprises 66 residues: Large ribosomal subunit protein uL29 (66 aa).

Belongs to the universal ribosomal protein uL29 family.

The polypeptide is Large ribosomal subunit protein uL29 (Rhizobium meliloti (strain 1021) (Ensifer meliloti)).